Reading from the N-terminus, the 103-residue chain is Methanol dehydrogenase [cytochrome c] subunit 2 (103 aa).

A signal peptide spans 1-20 (MKRILTLTVAALALGTPALA). Cys-26 and Cys-32 are disulfide-bonded.

This sequence belongs to the methanol dehydrogenase subunit 2 family. As to quaternary structure, heterotetramer composed of 2 alpha and 2 beta subunits.

It is found in the periplasm. It carries out the reaction 2 Fe(III)-[cytochrome cL] + a primary alcohol = 2 Fe(II)-[cytochrome cL] + an aldehyde + 2 H(+). Functionally, catalyzes the oxidation of primary alcohols including methanol. The polypeptide is Methanol dehydrogenase [cytochrome c] subunit 2 (moxI) (Paracoccus denitrificans).